A 180-amino-acid chain; its full sequence is uncharacterized protein (180 aa).

Positions Gln3–Ile33 form a coiled coil.

This is an uncharacterized protein from Acanthamoeba polyphaga (Amoeba).